The chain runs to 514 residues: Steroid 17-alpha-hydroxylase/17,20 lyase (514 aa).

Heme is bound at residue Cys-445.

This sequence belongs to the cytochrome P450 family. Heme serves as cofactor.

Its subcellular location is the membrane. It carries out the reaction a C21-steroid + reduced [NADPH--hemoprotein reductase] + O2 = a 17alpha-hydroxy-C21-steroid + oxidized [NADPH--hemoprotein reductase] + H2O + H(+). It catalyses the reaction 17alpha-hydroxyprogesterone + reduced [NADPH--hemoprotein reductase] + O2 = androst-4-ene-3,17-dione + acetate + oxidized [NADPH--hemoprotein reductase] + H2O + 2 H(+). The enzyme catalyses 17alpha-hydroxypregnenolone + reduced [NADPH--hemoprotein reductase] + O2 = 3beta-hydroxyandrost-5-en-17-one + acetate + oxidized [NADPH--hemoprotein reductase] + H2O + 2 H(+). It participates in lipid metabolism; steroid biosynthesis. Conversion of pregnenolone and progesterone to their 17-alpha-hydroxylated products and subsequently to dehydroepiandrosterone (DHEA) and androstenedione. Catalyzes both the 17-alpha-hydroxylation and the 17,20-lyase reaction. This is Steroid 17-alpha-hydroxylase/17,20 lyase (cyp17a1) from Ictalurus punctatus (Channel catfish).